We begin with the raw amino-acid sequence, 888 residues long: Autophagy-related protein 9 (888 aa).

Residues 1 to 170 (MASNIFSRIK…PYTTPMGPQP (170 aa)) are disordered. At 1 to 255 (MASNIFSRIK…CTRKMSGLWN (255 aa)) the chain is on the cytoplasmic side. Polar residues predominate over residues 13-24 (SGGSQSFYQQLR). The segment covering 28–38 (DPEYDPGLDEE) has biased composition (acidic residues). Polar residues predominate over residues 123 to 143 (RATNPGSSRTPASVGPSSART). The helical transmembrane segment at 256-276 (FAIWLYTFFFIWKCVQYFVEI) threads the bilayer. Topologically, residues 277 to 422 (RRLTYIRDFY…RLLSQKLRQR (146 aa)) are lumenal. The helical transmembrane segment at 423-443 (FLFAGFLNLLFAPVVLAYVVI) threads the bilayer. At 444-511 (VYFFTYYYEY…PKRITEAVAR (68 aa)) the chain is on the cytoplasmic side. The stretch at 512–532 (TIAFMSGAITAILAIGSVLDS) is an intramembrane region. At 533–544 (ELFLNFEITKDR) the chain is on the cytoplasmic side. Residues 545-565 (PVIFYLGVFAAIWATTRGMVS) form a helical membrane-spanning segment. Residues 566–611 (EETLVFNPEYALRNVIEYTRYVPDHWKNKLHSSEVKQEFSELYKMK) are Lumenal-facing. A helical transmembrane segment spans residues 612 to 632 (VVIFLEEMMGIVTTPMLLLFS). Over 633-642 (LPRCSDQIVD) the chain is Cytoplasmic. Residues 643–663 (FFREFTIHVDGLGYVCSFAVF) lie within the membrane without spanning it. The Cytoplasmic portion of the chain corresponds to 664–888 (DFQKGPGNTG…QRPRRGGGMV (225 aa)). Disordered regions lie at residues 748–770 (GRTG…PRIG) and 834–866 (EPGG…DPEA).

It belongs to the ATG9 family. In terms of assembly, homotrimer; forms a homotrimer with a central pore that forms a path between the two membrane leaflets. In terms of processing, phosphorylated by ATG1. ATG1 phosphorylation is required for ATG18 interaction and preautophagosome elongation.

It localises to the preautophagosomal structure membrane. Its subcellular location is the cytoplasmic vesicle membrane. The protein resides in the golgi apparatus membrane. The protein localises to the endoplasmic reticulum membrane. It carries out the reaction a 1,2-diacyl-sn-glycero-3-phosphocholine(in) = a 1,2-diacyl-sn-glycero-3-phosphocholine(out). The catalysed reaction is a 1,2-diacyl-sn-glycero-3-phospho-L-serine(in) = a 1,2-diacyl-sn-glycero-3-phospho-L-serine(out). It catalyses the reaction a 1,2-diacyl-sn-glycero-3-phosphoethanolamine(in) = a 1,2-diacyl-sn-glycero-3-phosphoethanolamine(out). The enzyme catalyses a 1,2-diacyl-sn-glycero-3-phospho-(1D-myo-inositol-3-phosphate)(in) = a 1,2-diacyl-sn-glycero-3-phospho-(1D-myo-inositol-3-phosphate)(out). In terms of biological role, phospholipid scramblase involved in autophagy and cytoplasm to vacuole transport (Cvt) vesicle formation. Cycles between the preautophagosomal structure/phagophore assembly site (PAS) and the cytoplasmic vesicle pool and supplies membrane for the growing autophagosome. Lipid scramblase activity plays a key role in preautophagosomal structure/phagophore assembly by distributing the phospholipids that arrive through ATG2 from the cytoplasmic to the luminal leaflet of the bilayer, thereby driving autophagosomal membrane expansion. Required for mitophagy. Also involved in endoplasmic reticulum-specific autophagic process and is essential for the survival of cells subjected to severe ER stress. Different machineries are required for anterograde trafficking to the PAS during either the Cvt pathway or bulk autophagy and for retrograde trafficking. Autophagy is required for proper vegetative growth, asexual/sexual reproduction, and full virulence. Autophagy is particularly involved in the biosynthesis of deoxynivalenol (DON), an important virulence determinant. Required for aerial hyphae development and lipid droplet degradation in response to starvation. In Gibberella zeae (strain ATCC MYA-4620 / CBS 123657 / FGSC 9075 / NRRL 31084 / PH-1) (Wheat head blight fungus), this protein is Autophagy-related protein 9.